The chain runs to 473 residues: Photosystem II CP43 reaction center protein (473 aa).

The propeptide occupies 1-14 (MKTLYSLRRFYHVE). An N-acetylthreonine modification is found at Thr15. Thr15 carries the post-translational modification Phosphothreonine. The next 5 membrane-spanning stretches (helical) occupy residues 69–93 (LFEV…PHLA), 134–155 (LLGP…KDRN), 178–200 (KALF…RKIT), 255–275 (KPFA…LSYS), and 291–312 (WFNN…ASQA). Glu367 contacts [CaMn4O5] cluster. Residues 447–471 (RARAAAAGFEKGIDRDFEPVLSMTP) traverse the membrane as a helical segment.

This sequence belongs to the PsbB/PsbC family. PsbC subfamily. In terms of assembly, PSII is composed of 1 copy each of membrane proteins PsbA, PsbB, PsbC, PsbD, PsbE, PsbF, PsbH, PsbI, PsbJ, PsbK, PsbL, PsbM, PsbT, PsbX, PsbY, PsbZ, Psb30/Ycf12, at least 3 peripheral proteins of the oxygen-evolving complex and a large number of cofactors. It forms dimeric complexes. Binds multiple chlorophylls and provides some of the ligands for the Ca-4Mn-5O cluster of the oxygen-evolving complex. It may also provide a ligand for a Cl- that is required for oxygen evolution. PSII binds additional chlorophylls, carotenoids and specific lipids. is required as a cofactor.

Its subcellular location is the plastid. The protein localises to the chloroplast thylakoid membrane. In terms of biological role, one of the components of the core complex of photosystem II (PSII). It binds chlorophyll and helps catalyze the primary light-induced photochemical processes of PSII. PSII is a light-driven water:plastoquinone oxidoreductase, using light energy to abstract electrons from H(2)O, generating O(2) and a proton gradient subsequently used for ATP formation. This chain is Photosystem II CP43 reaction center protein, found in Fagopyrum esculentum subsp. ancestrale (Wild buckwheat).